The following is a 354-amino-acid chain: Phospho-N-acetylmuramoyl-pentapeptide-transferase (354 aa).

The next 10 membrane-spanning stretches (helical) occupy residues Y16–M36, T66–V86, I88–V108, F130–L150, I168–T188, G193–T213, I227–F247, V257–I277, V282–V302, and K331–L351.

This sequence belongs to the glycosyltransferase 4 family. MraY subfamily. Requires Mg(2+) as cofactor.

The protein resides in the cell inner membrane. The enzyme catalyses UDP-N-acetyl-alpha-D-muramoyl-L-alanyl-gamma-D-glutamyl-meso-2,6-diaminopimeloyl-D-alanyl-D-alanine + di-trans,octa-cis-undecaprenyl phosphate = di-trans,octa-cis-undecaprenyl diphospho-N-acetyl-alpha-D-muramoyl-L-alanyl-D-glutamyl-meso-2,6-diaminopimeloyl-D-alanyl-D-alanine + UMP. The protein operates within cell wall biogenesis; peptidoglycan biosynthesis. Its function is as follows. Catalyzes the initial step of the lipid cycle reactions in the biosynthesis of the cell wall peptidoglycan: transfers peptidoglycan precursor phospho-MurNAc-pentapeptide from UDP-MurNAc-pentapeptide onto the lipid carrier undecaprenyl phosphate, yielding undecaprenyl-pyrophosphoryl-MurNAc-pentapeptide, known as lipid I. This is Phospho-N-acetylmuramoyl-pentapeptide-transferase from Nitratiruptor sp. (strain SB155-2).